A 208-amino-acid polypeptide reads, in one-letter code: Ribosomal RNA large subunit methyltransferase E (208 aa).

Residues G62, W64, D82, D98, and D123 each contribute to the S-adenosyl-L-methionine site. K163 serves as the catalytic Proton acceptor.

Belongs to the class I-like SAM-binding methyltransferase superfamily. RNA methyltransferase RlmE family.

It is found in the cytoplasm. It catalyses the reaction uridine(2552) in 23S rRNA + S-adenosyl-L-methionine = 2'-O-methyluridine(2552) in 23S rRNA + S-adenosyl-L-homocysteine + H(+). Its function is as follows. Specifically methylates the uridine in position 2552 of 23S rRNA at the 2'-O position of the ribose in the fully assembled 50S ribosomal subunit. This Glaesserella parasuis serovar 5 (strain SH0165) (Haemophilus parasuis) protein is Ribosomal RNA large subunit methyltransferase E.